Consider the following 241-residue polypeptide: Small ribosomal subunit protein uS2 (241 aa).

Belongs to the universal ribosomal protein uS2 family.

The protein is Small ribosomal subunit protein uS2 of Yersinia enterocolitica serotype O:8 / biotype 1B (strain NCTC 13174 / 8081).